Reading from the N-terminus, the 313-residue chain is Metal ABC transporter substrate-binding lipoprotein (313 aa).

The signal sequence occupies residues 1–23 (MIEKYKNILITFIALAAIVFLVG). C24 is lipidated: N-palmitoyl cysteine. The S-diacylglycerol cysteine moiety is linked to residue C24. Residues H71, H143, E209, and D284 each coordinate Zn(2+).

It belongs to the bacterial solute-binding protein 9 family. Lipoprotein receptor antigen (Lrai) subfamily.

It localises to the cell membrane. In terms of biological role, part of an ATP-driven transport system for a metal; probably for manganese. This Lactococcus lactis subsp. lactis (strain IL1403) (Streptococcus lactis) protein is Metal ABC transporter substrate-binding lipoprotein (mtsA).